The following is a 454-amino-acid chain: Uridine kinase (454 aa).

28–35 contributes to the ATP binding site; sequence GPSGSGKT.

This sequence belongs to the uridine kinase family.

Its subcellular location is the cytoplasm. It localises to the nucleus. The enzyme catalyses uridine + ATP = UMP + ADP + H(+). It catalyses the reaction cytidine + ATP = CMP + ADP + H(+). It participates in pyrimidine metabolism; CTP biosynthesis via salvage pathway; CTP from cytidine: step 1/3. Its pathway is pyrimidine metabolism; UMP biosynthesis via salvage pathway; UMP from uridine: step 1/1. Its function is as follows. Catalyzes the conversion of uridine into UMP and cytidine into CMP in the pyrimidine salvage pathway. The polypeptide is Uridine kinase (urk1) (Schizosaccharomyces pombe (strain 972 / ATCC 24843) (Fission yeast)).